The following is a 492-amino-acid chain: Trehalose-phosphatase (492 aa).

Residues 1-55 (MTETVTDQGKQRSSKLQKNEAAKDEQVEGKGKETLESGTDKSAEQNSSLLVGQPD) are disordered. Positions 17-43 (QKNEAAKDEQVEGKGKETLESGTDKSA) are enriched in basic and acidic residues. Positions 213 and 215 each coordinate Mg(2+). Catalysis depends on aspartate 215, which acts as the Proton donor/acceptor. 332–334 (QRK) provides a ligand contact to substrate. Aspartate 424 contributes to the Mg(2+) binding site.

The protein belongs to the gob-1 trehalose phosphatase family. The cofactor is Mg(2+).

The catalysed reaction is alpha,alpha-trehalose 6-phosphate + H2O = alpha,alpha-trehalose + phosphate. Its activity is regulated as follows. Inhibited by trehalose 6-sulfate. Catalyzes the hydrolysis of trehalose 6-phosphate to trehalose and phosphate; prevents the accumulation of toxic levels of trehalose 6-phosphate. In Brugia malayi (Filarial nematode worm), this protein is Trehalose-phosphatase.